The chain runs to 360 residues: Nucleoporin SEH1 (360 aa).

6 WD repeats span residues 10 to 49 (DHKDLIHDVSFDFHGRRMATCSSDQSVKVWDKSESGDWHC), 55 to 96 (THSG…SNDK), 111 to 152 (DSRT…NLSQ), 160 to 210 (SCKL…RKYA), 217 to 258 (TVTD…KELT), and 276 to 315 (NHNSQVWRVSWNITGTVLASSGDDGCVRLWKANYMDNWKC). Lysine 12 is covalently cross-linked (Glycyl lysine isopeptide (Lys-Gly) (interchain with G-Cter in SUMO2)). Phosphoserine is present on residues serine 179 and serine 190. Over residues 324–354 (SPVNGSSQQGTSNPSLGSTIPSLQNSLNGSS) the composition is skewed to polar residues. The segment at 324 to 360 (SPVNGSSQQGTSNPSLGSTIPSLQNSLNGSSAGRKHS) is disordered.

It belongs to the WD repeat SEC13 family. In terms of assembly, component of the Nup107-160 subcomplex of the nuclear pore complex (NPC). The Nup107-160 subcomplex includes NUP160, NUP133, NUP107, NUP98, NUP85, NUP43, NUP37, SEH1 and SEC13. The SEH1 subunit appears to be only weakly associated with the Nup107-160 subcomplex. Component of the GATOR2 subcomplex, composed of MIOS, SEC13, SEH1L, WDR24 and WDR59. The GATOR2 complex interacts with CASTOR1 and CASTOR2; the interaction is negatively regulated by arginine. The GATOR2 complex interacts with SESN1, SESN2 and SESN3; the interaction is negatively regulated by amino acids. SESN1, SESN2 and SESN3 convey leucine availability via direct interaction with SEH1L and WDR24.

It localises to the chromosome. Its subcellular location is the centromere. The protein localises to the kinetochore. The protein resides in the nucleus. It is found in the nuclear pore complex. It localises to the lysosome membrane. With respect to regulation, the GATOR2 complex is negatively regulated by the upstream amino acid sensors CASTOR1 and SESN2, which sequester the GATOR2 complex in absence of amino acids. In the presence of abundant amino acids, GATOR2 is released from CASTOR1 and SESN2 and activated. Its function is as follows. Component of the Nup107-160 subcomplex of the nuclear pore complex (NPC). The Nup107-160 subcomplex is required for the assembly of a functional NPC. The Nup107-160 subcomplex is also required for normal kinetochore microtubule attachment, mitotic progression and chromosome segregation. This subunit plays a role in recruitment of the Nup107-160 subcomplex to the kinetochore. As a component of the GATOR2 complex, functions as an activator of the amino acid-sensing branch of the mTORC1 signaling pathway. The GATOR2 complex indirectly activates mTORC1 through the inhibition of the GATOR1 subcomplex. GATOR2 probably acts as an E3 ubiquitin-protein ligase toward GATOR1. In the presence of abundant amino acids, the GATOR2 complex mediates ubiquitination of the NPRL2 core component of the GATOR1 complex, leading to GATOR1 inactivation. In the absence of amino acids, GATOR2 is inhibited, activating the GATOR1 complex. Within the GATOR2 complex, SEC13 and SEH1L are required to stabilize the complex. This chain is Nucleoporin SEH1 (SEH1L), found in Homo sapiens (Human).